The primary structure comprises 196 residues: Nitrogen regulatory protein P-II homolog (196 aa).

The transit peptide at 1 to 61 (MAASMTKPIS…NNSRVLPVVS (61 aa)) directs the protein to the chloroplast. ATP-binding positions include 108–112 (GFGAQ) and 161–164 (GDGK). Mg(2+) is bound at residue G110.

The protein belongs to the P(II) protein family. As to quaternary structure, homodimer. Interacts with NAGK. Interaction with NAGK is dependent of MgATP and inhibited by 2-oxoglutarate, arginine, glutamate, citrate, and oxaloacetate.

It is found in the plastid. The protein localises to the chloroplast. Participates in sensing carbon and organic nitrogen status and regulates some steps of primary carbon and nitrogen metabolism. Required for nitrite uptake in chloroplasts and regulates arginine biosynthesis through interaction with acetylglutamate kinase (NAGK) in chloroplasts. Regulates fatty acids synthesis in chloroplasts by interacting with the acetyl-CoA carboxylase complex and inhibiting acetyl-CoA carboxylase (ACCase) activity. This Arabidopsis thaliana (Mouse-ear cress) protein is Nitrogen regulatory protein P-II homolog (GLB1).